The following is a 478-amino-acid chain: 3-ketoacyl-CoA synthase 3 (478 aa).

The N-terminal stretch at 1–25 is a signal peptide; the sequence is MDLLVMLLSLLVSYLIFKIWKRIDS. Positions 26-313 constitute an FAE domain; it reads KRDQNCYILD…FMLCLLLKKL (288 aa). Catalysis depends on residues Cys-168, His-247, His-345, His-349, His-378, and Asn-382.

This sequence belongs to the thiolase-like superfamily. Chalcone/stilbene synthases family. Expressed in siliques, leaves, stems and seedlings.

Its subcellular location is the endoplasmic reticulum. It carries out the reaction a very-long-chain acyl-CoA + malonyl-CoA + H(+) = a very-long-chain 3-oxoacyl-CoA + CO2 + CoA. It functions in the pathway lipid metabolism; fatty acid biosynthesis. This chain is 3-ketoacyl-CoA synthase 3, found in Arabidopsis thaliana (Mouse-ear cress).